The following is a 290-amino-acid chain: uncharacterized protein (290 aa).

3 disordered regions span residues 89–157, 172–217, and 261–290; these read CSEN…EELS, MANT…MESS, and TANTPPTVVHVSKPSSETSVSIPPSSAVKK. Basic and acidic residues-rich tracts occupy residues 106–124 and 142–152; these read DFSKTTVDETIKEKSEKQP and KTEKLVSKEPS. Polar residues-rich tracts occupy residues 172-183 and 193-202; these read MANTSSSANRTG and KPTTAVQAST. Composition is skewed to low complexity over residues 207 to 217 and 274 to 290; these read MSSAESAMESS and PSSETSVSIPPSSAVKK.

This is an uncharacterized protein from Caenorhabditis elegans.